We begin with the raw amino-acid sequence, 126 residues long: Glycine cleavage system H protein (126 aa).

Residues 21-103 (TVTVGISNHA…YEGGWIARIK (83 aa)) form the Lipoyl-binding domain. Position 62 is an N6-lipoyllysine (Lys-62).

It belongs to the GcvH family. As to quaternary structure, the glycine cleavage system is composed of four proteins: P, T, L and H. (R)-lipoate serves as cofactor.

Functionally, the glycine cleavage system catalyzes the degradation of glycine. The H protein shuttles the methylamine group of glycine from the P protein to the T protein. The sequence is that of Glycine cleavage system H protein from Aliivibrio salmonicida (strain LFI1238) (Vibrio salmonicida (strain LFI1238)).